The chain runs to 163 residues: Outer membrane protein assembly factor BamE (163 aa).

Positions 1-22 (MINKKQSLTLLSAIALSVSLSA) are cleaved as a signal peptide. Cys23 is lipidated: N-palmitoyl cysteine. Residue Cys23 is the site of S-diacylglycerol cysteine attachment. The segment at 122–163 (EQSKLPMVNTTESAPQVPAQRPDEKPLVKENQTEAQVQKPIK) is disordered. A compositionally biased stretch (basic and acidic residues) spans 142 to 153 (RPDEKPLVKENQ).

Belongs to the BamE family. Part of the Bam complex.

Its subcellular location is the cell outer membrane. Functionally, part of the outer membrane protein assembly complex, which is involved in assembly and insertion of beta-barrel proteins into the outer membrane. The sequence is that of Outer membrane protein assembly factor BamE from Shewanella oneidensis (strain ATCC 700550 / JCM 31522 / CIP 106686 / LMG 19005 / NCIMB 14063 / MR-1).